A 720-amino-acid polypeptide reads, in one-letter code: ATP-dependent DNA helicase Hel308 (720 aa).

ATP is bound by residues Ser23, Gln28, and 46 to 53; that span reads IPTASGKT. Residues 33 to 197 form the Helicase ATP-binding domain; the sequence is KSGILEGKNA…WLNAELIVSD (165 aa). The DEAH box signature appears at 145–148; it reads DEIH. In terms of domain architecture, Helicase C-terminal spans 229-422; the sequence is LVYDAIRKKK…NLRSQVLALI (194 aa).

Belongs to the helicase family. Hel308 subfamily. In terms of assembly, monomer. Interacts with PCNA. The cofactor is Mg(2+). Zn(2+) is required as a cofactor.

It carries out the reaction Couples ATP hydrolysis with the unwinding of duplex DNA by translocating in the 3'-5' direction.. The enzyme catalyses ATP + H2O = ADP + phosphate + H(+). DNA-dependent ATPase and 3'-5' DNA helicase that may be involved in repair of stalled replication forks. Unwinds the lagging strand from forked DNA structures in a 3'-5' direction. PCNA, the DNA polymerase sliding clamp subunit, stimulates the helicase activity, and may alter substrate specificity. Unwinds branched DNA (Holliday junctions) in an ATP-dependent fashion; ss- and dsDNA stimulate ATPase to the greatest extent, although it preferentially binds DNA with a single-stranded region. Processes a RecA-mediated recombination intermediate between gapped circular and homologous linear dsDNA. This Pyrococcus furiosus (strain ATCC 43587 / DSM 3638 / JCM 8422 / Vc1) protein is ATP-dependent DNA helicase Hel308.